We begin with the raw amino-acid sequence, 163 residues long: Putative pre-16S rRNA nuclease (163 aa).

This sequence belongs to the YqgF nuclease family.

The protein resides in the cytoplasm. Functionally, could be a nuclease involved in processing of the 5'-end of pre-16S rRNA. This chain is Putative pre-16S rRNA nuclease, found in Rhizobium leguminosarum bv. trifolii (strain WSM2304).